The following is a 163-amino-acid chain: Nucleotide-binding protein BA_1166 (163 aa).

The protein belongs to the YajQ family.

In terms of biological role, nucleotide-binding protein. This is Nucleotide-binding protein BA_1166 from Bacillus anthracis.